A 401-amino-acid polypeptide reads, in one-letter code: Pyruvyl transferase 1 (401 aa).

Residues 1 to 30 form the signal peptide; the sequence is MFANINIRKSVWLFLLAAVSCTLFIYGVTR. Residues 38–64 are disordered; sequence NPSSLTSPSSSTSVDKKKPLFTKSPRN. The segment covering 39 to 50 has biased composition (low complexity); sequence PSSLTSPSSSTS.

This sequence belongs to the polysaccharide pyruvyl transferase family.

In terms of biological role, involved in cell wall biogenesis. Has a role in the addition of Gal-beta1,3 moieties to galactomannans and their subsequent pyruvylation. The polypeptide is Pyruvyl transferase 1 (pvg1) (Schizosaccharomyces pombe (strain 972 / ATCC 24843) (Fission yeast)).